The following is a 365-amino-acid chain: GTPase Obg (365 aa).

The region spanning 1 to 159 (MKFIDEARIE…RMLKLELKVL (159 aa)) is the Obg domain. Positions 160 to 334 (ADVGLLGMPN…LIYAIKDHLQ (175 aa)) constitute an OBG-type G domain. GTP-binding positions include 166 to 173 (GMPNAGKS), 191 to 195 (FTTLH), 213 to 216 (DIPG), 284 to 287 (NKLD), and 315 to 317 (SAL). Serine 173 and threonine 193 together coordinate Mg(2+).

Belongs to the TRAFAC class OBG-HflX-like GTPase superfamily. OBG GTPase family. As to quaternary structure, monomer. Mg(2+) is required as a cofactor.

It localises to the cytoplasm. Functionally, an essential GTPase which binds GTP, GDP and possibly (p)ppGpp with moderate affinity, with high nucleotide exchange rates and a fairly low GTP hydrolysis rate. Plays a role in control of the cell cycle, stress response, ribosome biogenesis and in those bacteria that undergo differentiation, in morphogenesis control. The sequence is that of GTPase Obg from Cupriavidus necator (strain ATCC 17699 / DSM 428 / KCTC 22496 / NCIMB 10442 / H16 / Stanier 337) (Ralstonia eutropha).